The primary structure comprises 442 residues: Proline--tRNA ligase (442 aa).

It belongs to the class-II aminoacyl-tRNA synthetase family. ProS type 2 subfamily. In terms of assembly, homodimer.

The protein localises to the cytoplasm. The catalysed reaction is tRNA(Pro) + L-proline + ATP = L-prolyl-tRNA(Pro) + AMP + diphosphate. In terms of biological role, catalyzes the attachment of proline to tRNA(Pro) in a two-step reaction: proline is first activated by ATP to form Pro-AMP and then transferred to the acceptor end of tRNA(Pro). The polypeptide is Proline--tRNA ligase (Mesorhizobium japonicum (strain LMG 29417 / CECT 9101 / MAFF 303099) (Mesorhizobium loti (strain MAFF 303099))).